Reading from the N-terminus, the 240-residue chain is Ribonuclease 3 (240 aa).

The RNase III domain maps to 13-143; it reads DHASLLEALG…LLGAVHLQHG (131 aa). Glu53 is a Mg(2+) binding site. The active site involves Asp57. Asp129 and Glu132 together coordinate Mg(2+). The active site involves Glu132. The DRBM domain maps to 170 to 238; sequence DWKTSLQELT…AGAAYQALTA (69 aa).

This sequence belongs to the ribonuclease III family. Homodimer. It depends on Mg(2+) as a cofactor.

Its subcellular location is the cytoplasm. It carries out the reaction Endonucleolytic cleavage to 5'-phosphomonoester.. Functionally, digests double-stranded RNA. Involved in the processing of primary rRNA transcript to yield the immediate precursors to the large and small rRNAs (23S and 16S). Processes some mRNAs, and tRNAs when they are encoded in the rRNA operon. Processes pre-crRNA and tracrRNA of type II CRISPR loci if present in the organism. This is Ribonuclease 3 from Nocardia farcinica (strain IFM 10152).